Reading from the N-terminus, the 647-residue chain is Leishmanolysin-like peptidase (647 aa).

H264 contacts Zn(2+). E265 is an active-site residue. Residues H268 and H370 each coordinate Zn(2+).

It belongs to the peptidase M8 family. It depends on Zn(2+) as a cofactor. Expressed in all cell lines analyzed.

The protein localises to the cytoplasm. It is found in the lipid droplet. Functionally, metalloprotease. In Homo sapiens (Human), this protein is Leishmanolysin-like peptidase (LMLN).